We begin with the raw amino-acid sequence, 669 residues long: NADH-ubiquinone oxidoreductase chain 5 (669 aa).

15 helical membrane passes run 3–23 (LLIV…GRFL), 50–70 (VALC…SELF), 81–100 (LTVI…HIYS), 119–139 (IFTF…LFLG), 178–198 (LALG…STIF), 211–231 (FLFC…VFIG), 253–273 (TPVS…FMIA), 286–306 (LIVI…TGIL), 322–342 (LGYM…FHLM), 377–397 (LLPF…GFPF), 423–443 (FWLG…LLFL), 464–484 (ILMA…GYLA), 522–542 (LIPI…NFVV), 628–648 (AFVM…WDFI), and 649–669 (SFWV…FINI).

Belongs to the complex I subunit 5 family.

Its subcellular location is the mitochondrion inner membrane. It carries out the reaction a ubiquinone + NADH + 5 H(+)(in) = a ubiquinol + NAD(+) + 4 H(+)(out). In terms of biological role, core subunit of the mitochondrial membrane respiratory chain NADH dehydrogenase (Complex I) that is believed to belong to the minimal assembly required for catalysis. Complex I functions in the transfer of electrons from NADH to the respiratory chain. The immediate electron acceptor for the enzyme is believed to be ubiquinone. The polypeptide is NADH-ubiquinone oxidoreductase chain 5 (ND5) (Marchantia polymorpha (Common liverwort)).